A 354-amino-acid polypeptide reads, in one-letter code: Uroporphyrinogen decarboxylase (354 aa).

Substrate contacts are provided by residues 25–29 (RQAGR), D75, Y152, T207, and H330.

It belongs to the uroporphyrinogen decarboxylase family. As to quaternary structure, homodimer.

The protein resides in the cytoplasm. The catalysed reaction is uroporphyrinogen III + 4 H(+) = coproporphyrinogen III + 4 CO2. It functions in the pathway porphyrin-containing compound metabolism; protoporphyrin-IX biosynthesis; coproporphyrinogen-III from 5-aminolevulinate: step 4/4. Its function is as follows. Catalyzes the decarboxylation of four acetate groups of uroporphyrinogen-III to yield coproporphyrinogen-III. The sequence is that of Uroporphyrinogen decarboxylase from Xanthomonas campestris pv. campestris (strain 8004).